The chain runs to 879 residues: MGKGEGYLDPTILSVASGSRNSGKGKERTRRKGGHKYHSLHVQDEEEEEPPESDALRTRGKVGLNAYEKALWKWVNVDDLDGFLQEVYDYYKGKGIYCIVLARVLNLLTTFFVIAFSTFLISCIDYSKLFSSISTAEAVGRLEDVLVAQCITKFVHFKLYILNKTNSSAYDYRGSFAHTLFLIILSAFFIFQVASFAMSVPRLLDMYRFYTHLLGVPDADIQTLPWPEIVRLIGDIRKHNPVTSLSNGQATALADMVGNDAKAPAKKLDAHDIANRILRQENYLIALFNKDLLDLRVRIPVPHVLTAFIPSSILISSADAPLPSLQSEPERKFLSFGANHLTKALEWNLRFCLLGYLFDRRGQVRKEFVREKRRKDLVQGLRRRFIFMGILNAIFAPFIILYLLIYSFFRYFEWKFREFNELPHLFERRLDRSYEIAKEYVDQFPKERTALVMRFVAFIAGSFAAVLLVASLIDPDLFLHFEITPHRTVLFYLGVFGSILAISRGMVPQENMVFDPEASLNEVVRWTHYLPVEWRGQLHSQMVHQEFSKLFALKIMIFFSELLSVILTPFILFFSLPPCAAAIIDFFREFTVHVDGVGYVCSFAVFDFARYGNVDANQPETGLEGATGPDGGPAADGFAAGKPSRPTTRRTTSSSPSRLKHRDWRGNENKMEQSFLHFKATHPDWQPSDPSSSLFLDRLMGAGTRNRHGGGPVSAATGGISGSIYGGGGGGVGGRGLGVDGSVMAEMEEERLRAKRQSYERAWAKSSHLHRPDSSHSHPLRHPHSAASEIIEEEEGGEGDKGDDSIDGWSKRVKTDGETDDEEERERLWKDEGVIIIFFLTNNHITVVVMNVCRCIFRVAADEHKTAGRINKSQTRRLT.

Positions 1 to 56 (MGKGEGYLDPTILSVASGSRNSGKGKERTRRKGGHKYHSLHVQDEEEEEPPESDAL) are disordered. Residues 27 to 39 (ERTRRKGGHKYHS) show a composition bias toward basic residues. A helical transmembrane segment spans residues 104–124 (VLNLLTTFFVIAFSTFLISCI). 2 N-linked (GlcNAc...) asparagine glycosylation sites follow: N163 and N166. The helical transmembrane segment at 180–200 (LFLIILSAFFIFQVASFAMSV) threads the bilayer. An intramembrane segment occupies 385–405 (FIFMGILNAIFAPFIILYLLI). 2 consecutive transmembrane segments (helical) span residues 455–475 (FVAF…LIDP) and 488–508 (TVLF…GMVP). An intramembrane segment occupies 555–575 (IMIFFSELLSVILTPFILFFS). Disordered regions lie at residues 620–666 (ETGL…DWRG) and 763–825 (WAKS…EEER). Positions 632–657 (GPAADGFAAGKPSRPTTRRTTSSSPS) are enriched in low complexity. Residues 798–817 (EGDKGDDSIDGWSKRVKTDG) show a composition bias toward basic and acidic residues.

This sequence belongs to the ATG9 family. In terms of assembly, homotrimer; forms a homotrimer with a central pore that forms a path between the two membrane leaflets. Phosphorylated by ATG1. ATG1 phosphorylation is required for preautophagosome elongation.

It is found in the preautophagosomal structure membrane. Its subcellular location is the cytoplasmic vesicle membrane. The protein resides in the golgi apparatus membrane. It localises to the endoplasmic reticulum membrane. The catalysed reaction is a 1,2-diacyl-sn-glycero-3-phosphocholine(in) = a 1,2-diacyl-sn-glycero-3-phosphocholine(out). It carries out the reaction a 1,2-diacyl-sn-glycero-3-phospho-L-serine(in) = a 1,2-diacyl-sn-glycero-3-phospho-L-serine(out). It catalyses the reaction a 1,2-diacyl-sn-glycero-3-phosphoethanolamine(in) = a 1,2-diacyl-sn-glycero-3-phosphoethanolamine(out). The enzyme catalyses a 1,2-diacyl-sn-glycero-3-phospho-(1D-myo-inositol-3-phosphate)(in) = a 1,2-diacyl-sn-glycero-3-phospho-(1D-myo-inositol-3-phosphate)(out). Its function is as follows. Phospholipid scramblase involved in autophagy and cytoplasm to vacuole transport (Cvt) vesicle formation. Cycles between the preautophagosomal structure/phagophore assembly site (PAS) and the cytoplasmic vesicle pool and supplies membrane for the growing autophagosome. Lipid scramblase activity plays a key role in preautophagosomal structure/phagophore assembly by distributing the phospholipids that arrive through ATG2 from the cytoplasmic to the luminal leaflet of the bilayer, thereby driving autophagosomal membrane expansion. Required for mitophagy. Also involved in endoplasmic reticulum-specific autophagic process and is essential for the survival of cells subjected to severe ER stress. Different machineries are required for anterograde trafficking to the PAS during either the Cvt pathway or bulk autophagy and for retrograde trafficking. This is Autophagy-related protein 9 (ATG9) from Cryptococcus neoformans var. neoformans serotype D (strain B-3501A) (Filobasidiella neoformans).